We begin with the raw amino-acid sequence, 127 residues long: MRHYEIVLLVHPDQSDQVVGMVERYISQIKEADGQIHRLEDWGRRQLAYPINKIHKAHYILMNVECGQSTLDELEELFRYNDAIIRNLIIRREHAITEESLLAKSAEEKRARKAQREEAQQVAQEAE.

It belongs to the bacterial ribosomal protein bS6 family.

Its function is as follows. Binds together with bS18 to 16S ribosomal RNA. The chain is Small ribosomal subunit protein bS6 from Acinetobacter baumannii (strain AB0057).